The primary structure comprises 154 residues: MKLLVLCIFAMMATLAMSRRWNFVTPREVNKAFEVALKVQIIAGFDRTLVKWLRAHGRSLSHVQKKALYFVNRRYMQTHWANYMLWVNKKIDALGRTAVVADYTRLGAEIGRRIDMDYFYNFLKGRNMIPKYLPYMEEINRMRSADIPIRYRGK.

A signal peptide spans 1-18 (MKLLVLCIFAMMATLAMS).

Homodimer. Sperm.

Dissolves the egg vitelline layer nonenzymatically during fertilization. It creates a hole of about 3 mu-m in diameter through which the sperm pass. The polypeptide is Egg-lysin (Haliotis walallensis (Flat abalone)).